A 288-amino-acid chain; its full sequence is uncharacterized protein (288 aa).

The HTH rpiR-type domain occupies 5–81; the sequence is GNVLNKIGSL…LELSIELATK (77 aa). The segment at residues 41-60 is a DNA-binding region (H-T-H motif); it reads LSEIAKHLQVGEATLVRFCR. The region spanning 129–269 is the SIS domain; the sequence is VVKVLKKARR…YALLVQGEED (141 aa).

This is an uncharacterized protein from Haemophilus influenzae (strain ATCC 51907 / DSM 11121 / KW20 / Rd).